Here is a 460-residue protein sequence, read N- to C-terminus: Beta-1,3-xylanase TXYA (460 aa).

A signal peptide spans 1–22 (MKKLAKMISVATLGACAFQAHA). A GH26 domain is found at 23–337 (LDGKLVPDQG…LSDPKFIRHS (315 aa)). The Proton donor role is filled by Glu-138. Catalysis depends on Glu-234, which acts as the Nucleophile. Residues 347 to 371 (GNSDGGNGGDNGGDNGGDNGGETPE) are disordered. Residues 348–366 (NSDGGNGGDNGGDNGGDNG) show a composition bias toward gly residues. The tract at residues 368–460 (ETPENCTDDF…TVTFTNQVCN (93 aa)) is carbohydrate binding module (CBM). Intrachain disulfides connect Cys-373-Cys-459 and Cys-404-Cys-409.

Belongs to the glycosyl hydrolase 26 family.

The catalysed reaction is Random hydrolysis of (1-&gt;3)-beta-D-glycosidic linkages in (1-&gt;3)-beta-D-xylans.. Its activity is regulated as follows. Completely inhibited by Cu(2+), Hg(2+) and N-bromosuccinimide. Strongly inhibited by Ag(+), Zn(2+) and Pb(2+). Moderately inhibited by Fe(3+), Al(3+), Mn(2+), dithiothreitol and p-chloromercuribenzoic acid. Slightly activated by Mg(2+) and Ca(2+). Unaffected by Na(+), K(+), Ba(2+), EDTA, iodoacetic acid and N-ethylmalaimide. Its function is as follows. Catalyzes the hydrolysis of beta-1,3-xylan into oligosaccharides, mainly xylotriose and xylobiose with smaller amounts of xylotetraose, xylose, xylopentaose and xylohexaose. Weakly active toward beta-1,3-xylotriose, yielding xylose and xylobiose. Converts beta-1,3-xylotetraose into xylotriose, xylobiose and xylose. Converts beta-1,3-xylopentaose into xylotetraose, xylotriose, xylobiose and xylose. Does not hydrolyze xylobiose, p-nitrophenyl-beta-xyloside, beta-1,4-xylan, curdlan or carboxymethylcellulose. The chain is Beta-1,3-xylanase TXYA from Vibrio sp.